Here is a 571-residue protein sequence, read N- to C-terminus: Penton protein (571 aa).

Residues 298 to 324 (DDTEQGGDGAGGGNNSGSGAEENSNAA) are disordered. Over residues 303 to 313 (GGDGAGGGNNS) the composition is skewed to gly residues. Low complexity predominate over residues 314-324 (GSGAEENSNAA). The Cell attachment site motif lies at 340–342 (RGD). Residues 347–383 (RAEEKRAEAEAAAEAAAPAAQPEVEKPQKKPVIKPLT) are disordered. A compositionally biased stretch (low complexity) spans 356–368 (EAAAEAAAPAAQP). Serine 455 is modified (phosphoserine; by host).

This sequence belongs to the adenoviridae penton family. Interacts with the fiber protein (via N-terminal tail region). Interacts with the capsid vertex protein; this interaction binds the penton base to neighboring peripentonal hexons. Interacts (via the cell attachment site RGD) with host heterodimer ITGAV-ITGB5; this interaction promotes virus internalization. Interacts with host WWP1 and WWP2.

The protein localises to the virion. It is found in the host nucleus. Functionally, major capsid protein that self-associates to form penton base pentamers, each in the shape of a pentagon, situated at the 12 vertices of the pseudo T=25 capsid. Involved in virus secondary attachment to host cell after initial attachment by the fiber protein. Binds host integrin heterodimer ITGAV-ITGB5 (alphaV-beta5) thereby triggering clathrin-mediated endocytosis of virions. Mediates initial virus attachment to CXADR-negative cells. Binding to integrins ITGAV-ITGB5 also seems to induce macropinocytosis uptake of the virus. As the virus enters the host cell, penton proteins are shed concomitant with virion acidification in the endosome. The polypeptide is Penton protein (Homo sapiens (Human)).